The chain runs to 348 residues: tRNA N6-adenosine threonylcarbamoyltransferase (348 aa).

Residues H116 and H120 each coordinate Fe cation. Residues 138–142, D171, G184, and N282 each bind substrate; that span reads IISGG. D310 serves as a coordination point for Fe cation.

The protein belongs to the KAE1 / TsaD family. Requires Fe(2+) as cofactor.

It localises to the cytoplasm. It catalyses the reaction L-threonylcarbamoyladenylate + adenosine(37) in tRNA = N(6)-L-threonylcarbamoyladenosine(37) in tRNA + AMP + H(+). Required for the formation of a threonylcarbamoyl group on adenosine at position 37 (t(6)A37) in tRNAs that read codons beginning with adenine. Is involved in the transfer of the threonylcarbamoyl moiety of threonylcarbamoyl-AMP (TC-AMP) to the N6 group of A37, together with TsaE and TsaB. TsaD likely plays a direct catalytic role in this reaction. In Ehrlichia ruminantium (strain Welgevonden), this protein is tRNA N6-adenosine threonylcarbamoyltransferase.